Consider the following 795-residue polypeptide: Cyclin-dependent kinase 11B (795 aa).

Residues 17 to 60 show a composition bias toward basic and acidic residues; sequence LQEKKRRKEQEEKAEIKRLKNSDDRDSKRDSLEEGELRDHRMEI. Residues 17 to 412 are disordered; that stretch reads LQEKKRRKEQ…EGDYVPDSPA (396 aa). Residues S47 and S72 each carry the phosphoserine modification. Over residues 95–113 the composition is skewed to basic residues; sequence EKAHHRKDEKRKEKRRHRS. Basic and acidic residues-rich tracts occupy residues 114-131, 138-227, 238-253, and 264-276; these read HSAE…EREH, REEQ…DKVK, PPRE…KPGE, and QLKE…RDLL. Residue S115 is modified to Phosphoserine. Phosphoserine is present on S283. A compositionally biased stretch (low complexity) spans 291–302; that stretch reads SAESSSAESGSG. Acidic residues-rich tracts occupy residues 303–364 and 383–392; these read SEEE…EERE and ESEEAEEEVG. One can recognise a Protein kinase domain in the interval 438–723; that stretch reads FQCLNRIEEG…AEDGLKHEYF (286 aa). ATP-binding positions include 444–452 and K467; that span reads IEEGTYGVV. S482 carries the post-translational modification Phosphoserine; by CDK7. T488 carries the post-translational modification Phosphothreonine; by CDK7. D562 functions as the Proton acceptor in the catalytic mechanism. S589 bears the Phosphoserine mark. Y594 bears the Phosphotyrosine mark. Residue T595 is modified to Phosphothreonine. Residue K641 forms a Glycyl lysine isopeptide (Lys-Gly) (interchain with G-Cter in SUMO2) linkage. A disordered region spans residues 733–795; that stretch reads SMFPTWPAKS…AAGPGFSLKF (63 aa). A Phosphothreonine modification is found at T751. A Phosphoserine modification is found at S752.

Belongs to the protein kinase superfamily. CMGC Ser/Thr protein kinase family. CDC2/CDKX subfamily. In terms of assembly, cleaved isoform SV9 (p110C) binds to the serine/threonine kinase PAK1 and RANBP9. p110C interacts with RNPS1. Isoform 7, but not isoform SV9, nor its cleavage product p110C, interacts with CCND3. Interacts with CCNL1 and CCNL2. Forms complexes with pre-mRNA-splicing factors, including at least SRSF1, SRSF2 and SRSF7/SLU7. Interacts with isoform 5 of MYO18A. As to quaternary structure, (Microbial infection) Interacts with human herpes virus 1 (HHV-1) transcriptional regulator ICP22. Requires Mg(2+) as cofactor. In terms of processing, during FAS- or TNF-induced apoptosis, isoform SV9 is cleaved by caspases to produce p110C, a fragment that contains the C-terminal kinase domain. Post-translationally, phosphorylation at Ser-115 creates a binding site for 14-3-3 proteins. p110C can be autophosphorylated. In terms of tissue distribution, expressed ubiquitously. Some evidence of isoform-specific tissue distribution.

The protein resides in the cytoplasm. It is found in the nucleus. The catalysed reaction is L-seryl-[protein] + ATP = O-phospho-L-seryl-[protein] + ADP + H(+). The enzyme catalyses L-threonyl-[protein] + ATP = O-phospho-L-threonyl-[protein] + ADP + H(+). With respect to regulation, phosphorylation at Thr-448 or Tyr-449 inactivates the enzyme, while phosphorylation at Thr-595 activates it. Plays multiple roles in cell cycle progression, cytokinesis and apoptosis. Involved in pre-mRNA splicing in a kinase activity-dependent manner. Isoform 7 may act as a negative regulator of normal cell cycle progression. The protein is Cyclin-dependent kinase 11B (CDK11B) of Homo sapiens (Human).